Consider the following 418-residue polypeptide: UDP-N-acetylglucosamine 1-carboxyvinyltransferase (418 aa).

22–23 contacts phosphoenolpyruvate; that stretch reads KN. Arg-92 provides a ligand contact to UDP-N-acetyl-alpha-D-glucosamine. The active-site Proton donor is the Cys-116. 2-(S-cysteinyl)pyruvic acid O-phosphothioketal is present on Cys-116. Positions 306 and 328 each coordinate UDP-N-acetyl-alpha-D-glucosamine.

Belongs to the EPSP synthase family. MurA subfamily.

The protein resides in the cytoplasm. It carries out the reaction phosphoenolpyruvate + UDP-N-acetyl-alpha-D-glucosamine = UDP-N-acetyl-3-O-(1-carboxyvinyl)-alpha-D-glucosamine + phosphate. The protein operates within cell wall biogenesis; peptidoglycan biosynthesis. Functionally, cell wall formation. Adds enolpyruvyl to UDP-N-acetylglucosamine. In Solibacter usitatus (strain Ellin6076), this protein is UDP-N-acetylglucosamine 1-carboxyvinyltransferase.